Consider the following 259-residue polypeptide: UPF0246 protein PLES_14941 (259 aa).

The protein belongs to the UPF0246 family.

This is UPF0246 protein PLES_14941 from Pseudomonas aeruginosa (strain LESB58).